Here is a 338-residue protein sequence, read N- to C-terminus: Probable tRNA pseudouridine synthase B (338 aa).

Catalysis depends on aspartate 78, which acts as the Nucleophile. The region spanning 245-320 is the PUA domain; sequence LPKIILRDSA…LAATSVRIMM (76 aa).

The protein belongs to the pseudouridine synthase TruB family. Type 2 subfamily.

It carries out the reaction uridine(55) in tRNA = pseudouridine(55) in tRNA. In terms of biological role, could be responsible for synthesis of pseudouridine from uracil-55 in the psi GC loop of transfer RNAs. The protein is Probable tRNA pseudouridine synthase B of Methanosarcina barkeri (strain Fusaro / DSM 804).